Reading from the N-terminus, the 210-residue chain is Na(+)-translocating NADH-quinone reductase subunit D (210 aa).

The next 5 membrane-spanning stretches (helical) occupy residues 42-62, 72-92, 103-123, 131-151, and 178-198; these read FVMT…VSVI, IIVQ…ILKA, VFVG…AFAM, LIDG…VGFF, and NGLM…IWAI.

Belongs to the NqrDE/RnfAE family. As to quaternary structure, composed of six subunits; NqrA, NqrB, NqrC, NqrD, NqrE and NqrF.

It is found in the cell inner membrane. It catalyses the reaction a ubiquinone + n Na(+)(in) + NADH + H(+) = a ubiquinol + n Na(+)(out) + NAD(+). In terms of biological role, NQR complex catalyzes the reduction of ubiquinone-1 to ubiquinol by two successive reactions, coupled with the transport of Na(+) ions from the cytoplasm to the periplasm. NqrA to NqrE are probably involved in the second step, the conversion of ubisemiquinone to ubiquinol. The sequence is that of Na(+)-translocating NADH-quinone reductase subunit D from Vibrio vulnificus (strain YJ016).